Consider the following 64-residue polypeptide: Prokaryotic ubiquitin-like protein Pup (64 aa).

The interval 1-37 (MAQEQTKRGGGGGEDDDLSGGAGAGQERREKLAEETD) is disordered. The segment at 21–58 (GAGAGQERREKLAEETDDLLDEIDDVLEENAEDFVRAY) is ARC ATPase binding. Positions 24 to 52 (AGQERREKLAEETDDLLDEIDDVLEENAE) form a coiled coil. At glutamine 64 the chain carries Deamidated glutamine. Residue glutamine 64 forms an Isoglutamyl lysine isopeptide (Gln-Lys) (interchain with K-? in acceptor proteins) linkage.

The protein belongs to the prokaryotic ubiquitin-like protein family. In terms of assembly, strongly interacts with the proteasome-associated ATPase ARC through a hydrophobic interface; the interacting region of Pup lies in its C-terminal half. There is one Pup binding site per ARC hexamer ring. Post-translationally, is modified by deamidation of its C-terminal glutamine to glutamate by the deamidase Dop, a prerequisite to the subsequent pupylation process.

The protein operates within protein degradation; proteasomal Pup-dependent pathway. Protein modifier that is covalently attached to lysine residues of substrate proteins, thereby targeting them for proteasomal degradation. The tagging system is termed pupylation. This Mycobacterium sp. (strain JLS) protein is Prokaryotic ubiquitin-like protein Pup.